We begin with the raw amino-acid sequence, 272 residues long: Sulfate transporter CysZ (272 aa).

The next 4 membrane-spanning stretches (helical) occupy residues 29–49 (FVIM…WLFI), 66–86 (WLSF…LLLF), 148–168 (IIAL…VPVL), and 219–239 (FVPV…TLMW).

This sequence belongs to the CysZ family.

It is found in the cell inner membrane. High affinity, high specificity proton-dependent sulfate transporter, which mediates sulfate uptake. Provides the sulfur source for the cysteine synthesis pathway. The protein is Sulfate transporter CysZ of Haemophilus influenzae (strain ATCC 51907 / DSM 11121 / KW20 / Rd).